A 674-amino-acid polypeptide reads, in one-letter code: Glutaminase kidney isoform, mitochondrial (674 aa).

The N-terminal 54 residues, Met1–Leu54, are a transit peptide targeting the mitochondrion. Positions Pro56–Ser123 are disordered. Residues Trp58–Gly71 are compositionally biased toward gly residues. Positions Pro89–Gly101 are enriched in low complexity. An N6-succinyllysine mark is found at Lys135 and Lys169. Position 291 (Ser291) interacts with substrate. The residue at position 316 (Lys316) is an N6-acetyllysine. The interval Gly320 to Phe327 is highly mobile activation loop. The substrate site is built by Asn340, Glu386, Asn393, Tyr419, Tyr471, and Val489. ANK repeat units lie at residues Asp590–Phe619 and Trp624–Pro653. The disordered stretch occupies residues Thr652 to Leu674. Ser657 bears the Phosphoserine mark.

This sequence belongs to the glutaminase family. As to quaternary structure, homotetramer, dimer of dimers. The tetramers can assemble into rod-like oligomers (in vitro), but the physiological significance of this is not clear. Interacts with RAF1 and MAP2K2. Interacts with ATCAY; the interaction is direct and may control GLS localization, negatively regulating its activity. Post-translationally, synthesized as a 74-kDa cytosolic precursor which is proteolytically processed by the mitochondrial-processing peptidase (MPP) via a 72-kDa intermediate to yield the mature mitochondrial 68- and 65-kDa subunits.

The protein resides in the mitochondrion. The protein localises to the cytoplasm. It is found in the cytosol. Its subcellular location is the mitochondrion matrix. It carries out the reaction L-glutamine + H2O = L-glutamate + NH4(+). Isoform 1 and isoform 2 are activated by phosphate, due to increased affinity for glutamine. At phosphate concentrations above 10 mM, isoform 2 is more efficient than isoform 1. Catalyzes the first reaction in the primary pathway for the renal catabolism of glutamine. Plays a role in maintaining acid-base homeostasis. Regulates the levels of the neurotransmitter glutamate, the main excitatory neurotransmitter in the brain. The polypeptide is Glutaminase kidney isoform, mitochondrial (Gls) (Mus musculus (Mouse)).